The following is a 165-amino-acid chain: Phosphopantetheine adenylyltransferase (165 aa).

Thr10 contacts substrate. ATP contacts are provided by residues 10–11 (TF) and His18. Substrate-binding residues include Lys42, Leu75, and Arg89. ATP is bound by residues 90 to 92 (GLR), Glu100, and 125 to 131 (YTYVASS).

This sequence belongs to the bacterial CoaD family. In terms of assembly, homohexamer. It depends on Mg(2+) as a cofactor.

It localises to the cytoplasm. It carries out the reaction (R)-4'-phosphopantetheine + ATP + H(+) = 3'-dephospho-CoA + diphosphate. It functions in the pathway cofactor biosynthesis; coenzyme A biosynthesis; CoA from (R)-pantothenate: step 4/5. Functionally, reversibly transfers an adenylyl group from ATP to 4'-phosphopantetheine, yielding dephospho-CoA (dPCoA) and pyrophosphate. This Chlorobium phaeobacteroides (strain BS1) protein is Phosphopantetheine adenylyltransferase.